Consider the following 321-residue polypeptide: Lipoyl synthase (321 aa).

Cys-68, Cys-73, Cys-79, Cys-94, Cys-98, Cys-101, and Ser-308 together coordinate [4Fe-4S] cluster. One can recognise a Radical SAM core domain in the interval 80–297; the sequence is FNHGTATFMI…KALADELGFT (218 aa).

This sequence belongs to the radical SAM superfamily. Lipoyl synthase family. It depends on [4Fe-4S] cluster as a cofactor.

Its subcellular location is the cytoplasm. It catalyses the reaction [[Fe-S] cluster scaffold protein carrying a second [4Fe-4S](2+) cluster] + N(6)-octanoyl-L-lysyl-[protein] + 2 oxidized [2Fe-2S]-[ferredoxin] + 2 S-adenosyl-L-methionine + 4 H(+) = [[Fe-S] cluster scaffold protein] + N(6)-[(R)-dihydrolipoyl]-L-lysyl-[protein] + 4 Fe(3+) + 2 hydrogen sulfide + 2 5'-deoxyadenosine + 2 L-methionine + 2 reduced [2Fe-2S]-[ferredoxin]. The protein operates within protein modification; protein lipoylation via endogenous pathway; protein N(6)-(lipoyl)lysine from octanoyl-[acyl-carrier-protein]: step 2/2. Functionally, catalyzes the radical-mediated insertion of two sulfur atoms into the C-6 and C-8 positions of the octanoyl moiety bound to the lipoyl domains of lipoate-dependent enzymes, thereby converting the octanoylated domains into lipoylated derivatives. The polypeptide is Lipoyl synthase (Shewanella baltica (strain OS223)).